Reading from the N-terminus, the 308-residue chain is Ribosomal protein L11 methyltransferase (308 aa).

T157, G178, D200, and N243 together coordinate S-adenosyl-L-methionine.

The protein belongs to the methyltransferase superfamily. PrmA family.

Its subcellular location is the cytoplasm. The catalysed reaction is L-lysyl-[protein] + 3 S-adenosyl-L-methionine = N(6),N(6),N(6)-trimethyl-L-lysyl-[protein] + 3 S-adenosyl-L-homocysteine + 3 H(+). In terms of biological role, methylates ribosomal protein L11. This chain is Ribosomal protein L11 methyltransferase, found in Pelotomaculum thermopropionicum (strain DSM 13744 / JCM 10971 / SI).